A 507-amino-acid polypeptide reads, in one-letter code: tRNA-2-methylthio-N(6)-dimethylallyladenosine synthase (507 aa).

In terms of domain architecture, MTTase N-terminal spans 13–129 (RTYQVRTYGC…LPALLERARH (117 aa)). The [4Fe-4S] cluster site is built by cysteine 22, cysteine 58, cysteine 92, cysteine 166, cysteine 170, and cysteine 173. In terms of domain architecture, Radical SAM core spans 152–388 (RESAYAAWVS…IALQESVTLE (237 aa)). The TRAM domain maps to 391-462 (QKQIGRMIEV…PHHLIADDGV (72 aa)). Basic and acidic residues predominate over residues 459-478 (DDGVRSHRRTRAGDAHEAGK). Residues 459 to 492 (DDGVRSHRRTRAGDAHEAGKKPSTPGIGLGMPAI) form a disordered region.

It belongs to the methylthiotransferase family. MiaB subfamily. As to quaternary structure, monomer. Requires [4Fe-4S] cluster as cofactor.

The protein resides in the cytoplasm. The catalysed reaction is N(6)-dimethylallyladenosine(37) in tRNA + (sulfur carrier)-SH + AH2 + 2 S-adenosyl-L-methionine = 2-methylsulfanyl-N(6)-dimethylallyladenosine(37) in tRNA + (sulfur carrier)-H + 5'-deoxyadenosine + L-methionine + A + S-adenosyl-L-homocysteine + 2 H(+). Functionally, catalyzes the methylthiolation of N6-(dimethylallyl)adenosine (i(6)A), leading to the formation of 2-methylthio-N6-(dimethylallyl)adenosine (ms(2)i(6)A) at position 37 in tRNAs that read codons beginning with uridine. The protein is tRNA-2-methylthio-N(6)-dimethylallyladenosine synthase of Mycobacteroides abscessus (strain ATCC 19977 / DSM 44196 / CCUG 20993 / CIP 104536 / JCM 13569 / NCTC 13031 / TMC 1543 / L948) (Mycobacterium abscessus).